The following is a 393-amino-acid chain: 1-deoxy-D-xylulose 5-phosphate reductoisomerase (393 aa).

5 residues coordinate NADPH: Thr13, Gly14, Ser15, Ile16, and Asn128. Lys129 serves as a coordination point for 1-deoxy-D-xylulose 5-phosphate. Glu130 provides a ligand contact to NADPH. Asp154 contributes to the Mn(2+) binding site. Ser155, Glu156, Ser178, and His201 together coordinate 1-deoxy-D-xylulose 5-phosphate. Residue Glu156 participates in Mn(2+) binding. Position 207 (Gly207) interacts with NADPH. 1-deoxy-D-xylulose 5-phosphate contacts are provided by Ser214, Asn219, Lys220, and Glu223. Position 223 (Glu223) interacts with Mn(2+).

It belongs to the DXR family. The cofactor is Mg(2+). Mn(2+) is required as a cofactor.

It catalyses the reaction 2-C-methyl-D-erythritol 4-phosphate + NADP(+) = 1-deoxy-D-xylulose 5-phosphate + NADPH + H(+). It functions in the pathway isoprenoid biosynthesis; isopentenyl diphosphate biosynthesis via DXP pathway; isopentenyl diphosphate from 1-deoxy-D-xylulose 5-phosphate: step 1/6. In terms of biological role, catalyzes the NADPH-dependent rearrangement and reduction of 1-deoxy-D-xylulose-5-phosphate (DXP) to 2-C-methyl-D-erythritol 4-phosphate (MEP). The chain is 1-deoxy-D-xylulose 5-phosphate reductoisomerase from Acidithiobacillus ferrooxidans (strain ATCC 23270 / DSM 14882 / CIP 104768 / NCIMB 8455) (Ferrobacillus ferrooxidans (strain ATCC 23270)).